The following is a 169-amino-acid chain: Putative esterase F42H10.6 (169 aa).

This sequence belongs to the thioesterase paaI family.

The sequence is that of Putative esterase F42H10.6 from Caenorhabditis elegans.